The following is a 187-amino-acid chain: Cytochrome b-245 chaperone 1 (187 aa).

A helical membrane pass occupies residues 20 to 42 (GIRSWSLLVGILSIGLAAAYYSG). Ser-168 carries the phosphoserine modification.

It belongs to the CYBC1 family. Interacts with CYBB; CYBC1 may act as a chaperone stabilizing Cytochrome b-245 heterodimer.

The protein localises to the endoplasmic reticulum membrane. Its function is as follows. Functions as a chaperone necessary for a stable expression of the CYBA and CYBB subunits of the cytochrome b-245 heterodimer. Controls the phagocyte respiratory burst and is essential for innate immunity. The chain is Cytochrome b-245 chaperone 1 from Bos taurus (Bovine).